The following is a 173-amino-acid chain: NADH-ubiquinone oxidoreductase chain 6 (173 aa).

Transmembrane regions (helical) follow at residues 1-21 (MTYF…AVAS), 27-47 (YGVV…LSLG), 48-68 (VSFV…VVFV), 87-107 (VVGY…VGGF), and 139-159 (CGVG…FVVL).

It belongs to the complex I subunit 6 family.

The protein localises to the mitochondrion membrane. It carries out the reaction a ubiquinone + NADH + 5 H(+)(in) = a ubiquinol + NAD(+) + 4 H(+)(out). Core subunit of the mitochondrial membrane respiratory chain NADH dehydrogenase (Complex I) that is believed to belong to the minimal assembly required for catalysis. Complex I functions in the transfer of electrons from NADH to the respiratory chain. The immediate electron acceptor for the enzyme is believed to be ubiquinone. The polypeptide is NADH-ubiquinone oxidoreductase chain 6 (MT-ND6) (Aethia pusilla (Least auklet)).